The chain runs to 350 residues: Ion-translocating oxidoreductase complex subunit D (350 aa).

A run of 3 helical transmembrane segments spans residues 36 to 56 (CYFFGWGTLIQIALAIAIAVA), 89 to 109 (IPALAPWWIAAIGVIFAILVV), and 124 to 144 (AMAAYVMLLISFPMQMTTWVA). T185 carries the post-translational modification FMN phosphoryl threonine. Helical transmembrane passes span 212-232 (GFGIGWALINLAYLAGGLVML), 239-259 (WQISTAILASLFVCASIGYLL), 265-285 (MGPLLHLFSGATMLAAFFIAT), 298-318 (LIFGSLIGLLVYLIRSFCGYP), and 319-339 (DAFAFAVLLANLCAPFIDYYV).

This sequence belongs to the NqrB/RnfD family. As to quaternary structure, the complex is composed of six subunits: RnfA, RnfB, RnfC, RnfD, RnfE and RnfG. The cofactor is FMN.

The protein localises to the cell inner membrane. In terms of biological role, part of a membrane-bound complex that couples electron transfer with translocation of ions across the membrane. The polypeptide is Ion-translocating oxidoreductase complex subunit D (Shewanella loihica (strain ATCC BAA-1088 / PV-4)).